Here is a 689-residue protein sequence, read N- to C-terminus: Beta-adrenergic receptor kinase 1 (689 aa).

Residues 1–190 form an N-terminal region; the sequence is MADLEAVLAD…ELNIHLTMND (190 aa). Residues 54–175 enclose the RGS domain; sequence TFEKIFSQKL…IESDKFTRFC (122 aa). Positions 191–453 constitute a Protein kinase domain; sequence FSVHRIIGRG…AQEVKESPFF (263 aa). ATP contacts are provided by residues 197–205 and Lys220; that span reads IGRGGFGEV. Catalysis depends on Asp317, which acts as the Proton acceptor. Residues 454–521 enclose the AGC-kinase C-terminal domain; sequence RSLDWQMVFL…TISERWQQEV (68 aa). Positions 558–652 constitute a PH domain; that stretch reads DCIVHGYMSK…WKKELRDAYR (95 aa). Ser670 bears the Phosphoserine mark.

It belongs to the protein kinase superfamily. AGC Ser/Thr protein kinase family. GPRK subfamily. Interacts with the heterodimer formed by GNB1 and GNG2. Interacts with GIT1. Interacts with, and phosphorylates chemokine-stimulated CCR5. Interacts with ARRB1. Interacts with LPAR1 and LPAR2. Interacts with RALA in response to LPAR1 activation. ADRBK1 and RALA mutually inhibit each other's binding to LPAR1. Interacts with ADRB2.

Its subcellular location is the cytoplasm. It localises to the cell membrane. It is found in the postsynapse. The protein localises to the presynapse. It catalyses the reaction [beta-adrenergic receptor] + ATP = [beta-adrenergic receptor]-phosphate + ADP + H(+). In contrast to other AGC family kinases, the catalytic activity is solely regulated by the binding of substrates and ligands, not by phosphorylation of the kinase domain. Specifically phosphorylates the agonist-occupied form of the beta-adrenergic and closely related receptors, probably inducing a desensitization of them. Key regulator of LPAR1 signaling. Competes with RALA for binding to LPAR1 thus affecting the signaling properties of the receptor. Desensitizes LPAR1 and LPAR2 in a phosphorylation-independent manner. Positively regulates ciliary smoothened (SMO)-dependent Hedgehog (Hh) signaling pathway by facilitating the trafficking of SMO into the cilium and the stimulation of SMO activity. Inhibits relaxation of airway smooth muscle in response to blue light. The sequence is that of Beta-adrenergic receptor kinase 1 from Mus musculus (Mouse).